We begin with the raw amino-acid sequence, 900 residues long: 3'-5' exonuclease DinG (900 aa).

The Exonuclease domain maps to 8–161 (VVDLETTGNQ…DEDAATTAQL (154 aa)). Residues 241–496 (TLVTKELGLT…KSIDLLEQQR (256 aa)) enclose the Helicase ATP-binding domain. 276 to 283 (APLGSGKS) provides a ligand contact to ATP. A DEAH box motif is present at residues 448-451 (DEAH). One can recognise a Helicase C-terminal domain in the interval 714–883 (YVIEYVSVVE…RYRQKKGDIK (170 aa)).

Belongs to the helicase family. DinG subfamily. Type 2 sub-subfamily.

In terms of biological role, 3'-5' exonuclease. This is 3'-5' exonuclease DinG from Staphylococcus saprophyticus subsp. saprophyticus (strain ATCC 15305 / DSM 20229 / NCIMB 8711 / NCTC 7292 / S-41).